Consider the following 364-residue polypeptide: Selenide, water dikinase (364 aa).

Residue Sec-25 is part of the active site. A non-standard amino acid (selenocysteine) is located at residue Sec-25. ATP is bound by residues Lys-28, 46 to 48 (GYD), Asp-66, Asp-89, and 141 to 143 (GQT). Asp-48 is a binding site for Mg(2+). Mg(2+) is bound at residue Asp-89. Position 244 (Asp-244) interacts with Mg(2+).

It belongs to the selenophosphate synthase 1 family. Class II subfamily. In terms of assembly, homodimer. The cofactor is Mg(2+).

It carries out the reaction hydrogenselenide + ATP + H2O = selenophosphate + AMP + phosphate + 2 H(+). In terms of biological role, synthesizes selenophosphate from selenide and ATP. The chain is Selenide, water dikinase (selD) from Dictyostelium discoideum (Social amoeba).